Reading from the N-terminus, the 682-residue chain is Inactive protein-arginine deiminase type-6 (682 aa).

Ser-2 and Ser-434 each carry phosphoserine.

It belongs to the protein arginine deiminase family. Homodimers. Associates with alpha-tubulin. Phosphorylation at Ser-2, possibly by RSK-type kinases, and Ser-434 creates binding sites for 14-3-3 proteins. As to expression, expressed at very high levels in oocytes. Weakly expressed in testis. Expressed in primordial, primary, secondary and Graafian follicles, and in immature oocytes, mature eggs and blastocyst (at protein level).

The protein resides in the cytoplasm. Its subcellular location is the nucleus. It localises to the cytoplasmic vesicle. It is found in the secretory vesicle. The protein localises to the cortical granule. In terms of biological role, structural constituent of cytoplasmic lattices, which plays a key role in early embryonic development. Cytoplasmic lattices consist in fibrous structures found in the cytoplasm of oocytes and preimplantation embryos. They are required to store maternal proteins critical for embryonic development, such as ribosomal proteins and proteins that control epigenetic reprogramming of the preimplantation embryo, and prevent their degradation or activation. In contrast to other members of the family, does not show protein-arginine deiminase activity due to its inability to bind Ca(2+). In Mus musculus (Mouse), this protein is Inactive protein-arginine deiminase type-6.